We begin with the raw amino-acid sequence, 410 residues long: Serine hydroxymethyltransferase (410 aa).

(6S)-5,6,7,8-tetrahydrofolate-binding positions include Leu-119 and 123 to 125 (GHL). Lys-228 is modified (N6-(pyridoxal phosphate)lysine). Position 351–353 (351–353 (SPF)) interacts with (6S)-5,6,7,8-tetrahydrofolate.

This sequence belongs to the SHMT family. In terms of assembly, homodimer. The cofactor is pyridoxal 5'-phosphate.

The protein localises to the cytoplasm. The catalysed reaction is (6R)-5,10-methylene-5,6,7,8-tetrahydrofolate + glycine + H2O = (6S)-5,6,7,8-tetrahydrofolate + L-serine. It functions in the pathway one-carbon metabolism; tetrahydrofolate interconversion. It participates in amino-acid biosynthesis; glycine biosynthesis; glycine from L-serine: step 1/1. Catalyzes the reversible interconversion of serine and glycine with tetrahydrofolate (THF) serving as the one-carbon carrier. This reaction serves as the major source of one-carbon groups required for the biosynthesis of purines, thymidylate, methionine, and other important biomolecules. Also exhibits THF-independent aldolase activity toward beta-hydroxyamino acids, producing glycine and aldehydes, via a retro-aldol mechanism. The sequence is that of Serine hydroxymethyltransferase from Alkaliphilus oremlandii (strain OhILAs) (Clostridium oremlandii (strain OhILAs)).